Reading from the N-terminus, the 261-residue chain is Methyl jasmonate esterase 1 (261 aa).

The AB hydrolase-1 domain occupies 8-251; the sequence is FVLVHGACHG…MFSKPLDLCA (244 aa). The Acyl-ester intermediate role is filled by Ser-82. Active-site charge relay system residues include Asp-211 and His-239.

The protein belongs to the AB hydrolase superfamily. Methylesterase family. As to quaternary structure, homodimer.

It carries out the reaction methyl (-)-jasmonate + H2O = jasmonate + methanol + H(+). The catalysed reaction is methyl salicylate + H2O = salicylate + methanol + H(+). The protein operates within plant hormone biosynthesis. It participates in lipid metabolism; oxylipin biosynthesis. Its function is as follows. Methylesterase that catalyzes the hydrolysis of methyl jasmonate (MeJA) into jasmonate (JA). Can also use methyl salicylate (MeSA) as substrate with a lower efficiency. The sequence is that of Methyl jasmonate esterase 1 from Vitis vinifera (Grape).